A 284-amino-acid chain; its full sequence is 2-dehydro-3-deoxyphosphooctonate aldolase (284 aa).

Belongs to the KdsA family.

The protein resides in the cytoplasm. It catalyses the reaction D-arabinose 5-phosphate + phosphoenolpyruvate + H2O = 3-deoxy-alpha-D-manno-2-octulosonate-8-phosphate + phosphate. It participates in carbohydrate biosynthesis; 3-deoxy-D-manno-octulosonate biosynthesis; 3-deoxy-D-manno-octulosonate from D-ribulose 5-phosphate: step 2/3. Its pathway is bacterial outer membrane biogenesis; lipopolysaccharide biosynthesis. The protein is 2-dehydro-3-deoxyphosphooctonate aldolase of Vibrio atlanticus (strain LGP32) (Vibrio splendidus (strain Mel32)).